The primary structure comprises 217 residues: Peptide methionine sulfoxide reductase MsrA (217 aa).

Residue Cys-56 is part of the active site.

The protein belongs to the MsrA Met sulfoxide reductase family.

The catalysed reaction is L-methionyl-[protein] + [thioredoxin]-disulfide + H2O = L-methionyl-(S)-S-oxide-[protein] + [thioredoxin]-dithiol. The enzyme catalyses [thioredoxin]-disulfide + L-methionine + H2O = L-methionine (S)-S-oxide + [thioredoxin]-dithiol. Functionally, has an important function as a repair enzyme for proteins that have been inactivated by oxidation. Catalyzes the reversible oxidation-reduction of methionine sulfoxide in proteins to methionine. This Corynebacterium glutamicum (strain ATCC 13032 / DSM 20300 / JCM 1318 / BCRC 11384 / CCUG 27702 / LMG 3730 / NBRC 12168 / NCIMB 10025 / NRRL B-2784 / 534) protein is Peptide methionine sulfoxide reductase MsrA.